Here is a 431-residue protein sequence, read N- to C-terminus: Glutamate-1-semialdehyde 2,1-aminomutase (431 aa).

Lys267 is subject to N6-(pyridoxal phosphate)lysine.

This sequence belongs to the class-III pyridoxal-phosphate-dependent aminotransferase family. HemL subfamily. Homodimer. Pyridoxal 5'-phosphate serves as cofactor.

It localises to the cytoplasm. It carries out the reaction (S)-4-amino-5-oxopentanoate = 5-aminolevulinate. Its pathway is porphyrin-containing compound metabolism; protoporphyrin-IX biosynthesis; 5-aminolevulinate from L-glutamyl-tRNA(Glu): step 2/2. This Myxococcus xanthus (strain DK1622) protein is Glutamate-1-semialdehyde 2,1-aminomutase.